We begin with the raw amino-acid sequence, 428 residues long: Monocarboxylate transporter 13 (428 aa).

The Cytoplasmic segment spans residues 1–10; that stretch reads MVHRTEPPDG. Transmembrane regions (helical) follow at residues 11–31, 52–72, 81–101, 106–126, 139–159, 172–192, 221–241, 244–264, 283–303, 309–329, 338–358, and 374–394; these read GWGW…FGVL, VSWI…IGSA, PVVM…SFAT, LYLS…TPTL, LAMG…APLF, LLLV…LRPL, VALT…VAHL, LGWD…SDLV, LLML…VAQA, VLAV…FSVI, IYCG…LGAP, and FVVA…LPHF. The Cytoplasmic portion of the chain corresponds to 395-428; it reads FSCISLSTSRPQDLVIEAPDTKIPLPKEEGLGEN.

It belongs to the major facilitator superfamily. Monocarboxylate porter (TC 2.A.1.13) family.

Its subcellular location is the golgi apparatus membrane. It localises to the cell membrane. Its function is as follows. Proton-linked monocarboxylate transporter. May catalyze the transport of monocarboxylates across the plasma membrane. In Rattus norvegicus (Rat), this protein is Monocarboxylate transporter 13 (Slc16a13).